The following is a 368-amino-acid chain: Propane 2-monooxygenase, hydroxylase component small subunit (368 aa).

Residues 1–17 (MSAPEKPRERSFPKIEF) are compositionally biased toward basic and acidic residues. A disordered region spans residues 1–32 (MSAPEKPRERSFPKIEFTDSEAGAKEFPSSKS).

The protein belongs to the TmoE/XamoE family. As to quaternary structure, the propane 2-monooxygenase multicomponent enzyme system is composed of an electron transfer component and a monooxygenase component interacting with the effector protein MimD. The electron transfer component is composed of a reductase (MimB), and the monooxygenase component is formed by a large subunit (MimA) and a small subunit (MimC). Requires the presence of the chaperonin-like protein MimG to ensure a productive folding, resulting of a soluble MimC, which leads to the active form of MimABCD.

It catalyses the reaction propane + NADH + O2 + H(+) = propan-2-ol + NAD(+) + H2O. It carries out the reaction acetone + NADH + O2 + H(+) = hydroxyacetone + NAD(+) + H2O. The catalysed reaction is butan-2-one + NADH + O2 + H(+) = 1-hydroxy-2-butanone + NAD(+) + H2O. The enzyme catalyses phenol + NADH + O2 + H(+) = hydroquinone + NAD(+) + H2O. Functionally, component of the propane 2-monooxygenase multicomponent enzyme system which is involved in the degradation of propane via the O2-dependent hydroxylation of propane. Also involved in the degradation of acetone via the O2-dependent hydroxylation of acetone. Also able to catalyze the oxidation of phenol, methylethylketone (2-butanone), 1-propanol and 2-propanol. The polypeptide is Propane 2-monooxygenase, hydroxylase component small subunit (Mycolicibacterium smegmatis (strain ATCC 700084 / mc(2)155) (Mycobacterium smegmatis)).